A 366-amino-acid polypeptide reads, in one-letter code: Endophilin-B1 (366 aa).

Residues 1–30 (MNIMDFNMKKLAADAGTFLSRAVQFTEEKL) are membrane-binding amphipathic helix. Residues 1–37 (MNIMDFNMKKLAADAGTFLSRAVQFTEEKLGQAEKTE) form a required for membrane binding region. Residues 27–261 (EEKLGQAEKT…LGSFPSTFLS (235 aa)) enclose the BAR domain. 2 coiled-coil regions span residues 34–54 (EKTE…CTKQ) and 160–185 (KERK…AKVA). Residues 306–366 (SGSRKARVLY…VPITYLELLN (61 aa)) form the SH3 domain.

Belongs to the endophilin family. Homodimer, and heterodimer with SH3GLB2. Binds BAX. Binds DNM1, HTT, AMPH, BIN1 and ARFGAP1.

It is found in the cytoplasm. The protein localises to the golgi apparatus membrane. The protein resides in the mitochondrion outer membrane. In terms of biological role, may be required for normal outer mitochondrial membrane dynamics. Required for coatomer-mediated retrograde transport in certain cells. May recruit other proteins to membranes with high curvature. May promote membrane fusion. The protein is Endophilin-B1 of Gallus gallus (Chicken).